The following is a 157-amino-acid chain: Crossover junction endodeoxyribonuclease RuvC (157 aa).

Active-site residues include Asp7, Glu66, and Asp139. Mg(2+)-binding residues include Asp7, Glu66, and Asp139.

This sequence belongs to the RuvC family. In terms of assembly, homodimer which binds Holliday junction (HJ) DNA. The HJ becomes 2-fold symmetrical on binding to RuvC with unstacked arms; it has a different conformation from HJ DNA in complex with RuvA. In the full resolvosome a probable DNA-RuvA(4)-RuvB(12)-RuvC(2) complex forms which resolves the HJ. The cofactor is Mg(2+).

It localises to the cytoplasm. The catalysed reaction is Endonucleolytic cleavage at a junction such as a reciprocal single-stranded crossover between two homologous DNA duplexes (Holliday junction).. In terms of biological role, the RuvA-RuvB-RuvC complex processes Holliday junction (HJ) DNA during genetic recombination and DNA repair. Endonuclease that resolves HJ intermediates. Cleaves cruciform DNA by making single-stranded nicks across the HJ at symmetrical positions within the homologous arms, yielding a 5'-phosphate and a 3'-hydroxyl group; requires a central core of homology in the junction. The consensus cleavage sequence is 5'-(A/T)TT(C/G)-3'. Cleavage occurs on the 3'-side of the TT dinucleotide at the point of strand exchange. HJ branch migration catalyzed by RuvA-RuvB allows RuvC to scan DNA until it finds its consensus sequence, where it cleaves and resolves the cruciform DNA. This is Crossover junction endodeoxyribonuclease RuvC from Helicobacter pylori (strain ATCC 700392 / 26695) (Campylobacter pylori).